Reading from the N-terminus, the 447-residue chain is Na(+)-translocating NADH-quinone reductase subunit A (447 aa).

It belongs to the NqrA family. As to quaternary structure, composed of six subunits; NqrA, NqrB, NqrC, NqrD, NqrE and NqrF.

The catalysed reaction is a ubiquinone + n Na(+)(in) + NADH + H(+) = a ubiquinol + n Na(+)(out) + NAD(+). In terms of biological role, NQR complex catalyzes the reduction of ubiquinone-1 to ubiquinol by two successive reactions, coupled with the transport of Na(+) ions from the cytoplasm to the periplasm. NqrA to NqrE are probably involved in the second step, the conversion of ubisemiquinone to ubiquinol. The sequence is that of Na(+)-translocating NADH-quinone reductase subunit A from Yersinia pseudotuberculosis serotype O:1b (strain IP 31758).